The sequence spans 122 residues: Large ribosomal subunit protein eL18 (122 aa).

This sequence belongs to the eukaryotic ribosomal protein eL18 family.

The polypeptide is Large ribosomal subunit protein eL18 (Thermoplasma volcanium (strain ATCC 51530 / DSM 4299 / JCM 9571 / NBRC 15438 / GSS1)).